The following is a 235-amino-acid chain: Small capsomere-interacting protein (235 aa).

The tract at residues 104–235 (PRIIRPQPPN…SGNASRSRRV (132 aa)) is disordered. Residues 127-139 (PQKTQSADQSALQ) are compositionally biased toward polar residues. Low complexity predominate over residues 158–188 (TTSASVGQQQHVVSGSSGQQPQQGAQSSTVQ). Residues 220-235 (LSHTGQSGNASRSRRV) show a composition bias toward polar residues.

It belongs to the herpesviridae small capsomere-interacting protein family. As to quaternary structure, interacts with the major capsid protein/MCP.

It is found in the virion. Its subcellular location is the host nucleus. In terms of biological role, participates in the assembly of the infectious particles by decorating the outer surface of the capsid shell and thus forming a layer between the capsid and the tegument. Complexes composed of the capsid protein VP5 and VP26 assemble together in the host cytoplasm and are translocated to the nucleus, where they accumulate and participate in capsid assembly. Participates in the assembly of the infectious particles by decorating the outer surface of the capsid shell and thus forming a layer between the capsid and the tegument. Complexes composed of the major capsid protein and small capsomere-interacting protein/SCP assemble together in the host cytoplasm and are translocated to the nucleus, where they accumulate and participate in capsid assembly. In Homo sapiens (Human), this protein is Small capsomere-interacting protein.